The sequence spans 52 residues: Keratin-associated protein 19-2 (52 aa).

The protein belongs to the KRTAP type 19 family. In terms of assembly, interacts with hair keratins.

Its function is as follows. In the hair cortex, hair keratin intermediate filaments are embedded in an interfilamentous matrix, consisting of hair keratin-associated proteins (KRTAP), which are essential for the formation of a rigid and resistant hair shaft through their extensive disulfide bond cross-linking with abundant cysteine residues of hair keratins. The matrix proteins include the high-sulfur and high-glycine-tyrosine keratins. The protein is Keratin-associated protein 19-2 (KRTAP19-2) of Homo sapiens (Human).